We begin with the raw amino-acid sequence, 273 residues long: Large ribosomal subunit protein uL2 (273 aa).

Disordered stretches follow at residues 32–53 (PLVE…TTRH) and 221–273 (RGTA…RRSK). Residues 39–48 (KSGGRNNNGR) are compositionally biased toward low complexity.

It belongs to the universal ribosomal protein uL2 family. In terms of assembly, part of the 50S ribosomal subunit. Forms a bridge to the 30S subunit in the 70S ribosome.

Its function is as follows. One of the primary rRNA binding proteins. Required for association of the 30S and 50S subunits to form the 70S ribosome, for tRNA binding and peptide bond formation. It has been suggested to have peptidyltransferase activity; this is somewhat controversial. Makes several contacts with the 16S rRNA in the 70S ribosome. In Erwinia tasmaniensis (strain DSM 17950 / CFBP 7177 / CIP 109463 / NCPPB 4357 / Et1/99), this protein is Large ribosomal subunit protein uL2.